Reading from the N-terminus, the 25-residue chain is Ocellatin-P1 (25 aa).

L25 carries the leucine amide modification.

In terms of tissue distribution, expressed by the skin glands.

The protein localises to the secreted. Its function is as follows. Antibacterial peptide that inhibits reference strains of both Gram-negative bacteria (E.coli, E.cloacae, K.pneumoniae, P.aeruginosa) and Gram-positive bacteria (S.aureus, S.epidermidis, E.faecalis, Streptococcus group B) with relatively low potencies (MIC=25-200 uM). The peptide shows very low hemolytic activity against human erythrocytes. Wheel projection demonstrates the amphipathicity of the alpha-helices is low which may explain the low antibacterial potency. This Leptodactylus pentadactylus (Smokey jungle frog) protein is Ocellatin-P1.